We begin with the raw amino-acid sequence, 793 residues long: 28S rRNA (cytosine-C(5))-methyltransferase (793 aa).

Residues 1 to 194 form a disordered region; the sequence is MGRKLDPTKK…RKDDKAEGDL (194 aa). The N-terminal domain stretch occupies residues 1–355; that stretch reads MGRKLDPTKK…YLAGHYMLQG (355 aa). Basic residues-rich tracts occupy residues 10–22 and 44–57; these read KEKR…ARKQ and LSSR…KRRA. An interaction with NPM1 region spans residues 25 to 57; the sequence is AETELVRFLPAAGDENSKRLSSRARKRAAKRRA. Residues 41–58 carry the Nucleolar localization signal motif; the sequence is SKRLSSRARKRAAKRRAG. Serine 59 and serine 68 each carry phosphoserine. Residue lysine 72 forms a Glycyl lysine isopeptide (Lys-Gly) (interchain with G-Cter in SUMO2) linkage. Arginine 86 bears the Citrulline mark. Acidic residues-rich tracts occupy residues 98–110 and 118–128; these read DGDE…EDDV and GSEDSDEDMVD. Arginine 148 carries the post-translational modification Citrulline. Residues 165–178 are compositionally biased toward acidic residues; it reads NEEDTDEDEDDDGV. Threonine 169 carries the phosphothreonine modification. Serine 179 bears the Phosphoserine mark. The span at 182–192 shows a compositional bias: basic and acidic residues; it reads SHPRKDDKAEG. Lysine 257 participates in a covalent cross-link: Glycyl lysine isopeptide (Lys-Gly) (interchain with G-Cter in SUMO2). The tract at residues 356–579 is catalytic domain; it reads ASSMLPVMAL…KKFSNSIPQP (224 aa). S-adenosyl-L-methionine is bound by residues 377-383, aspartate 401, aspartate 428, and aspartate 445; that span reads CCAPGGK. Residue cysteine 502 is the Nucleophile of the active site. Positions 576–793 are disordered; it reads IPQPHAGNSA…TKGNSQPLLS (218 aa). The tract at residues 580–793 is C-terminal domain; that stretch reads HAGNSAAATP…TKGNSQPLLS (214 aa). Polar residues predominate over residues 599 to 609; sequence TPKSENGSQPT. Lysine 601 participates in a covalent cross-link: Glycyl lysine isopeptide (Lys-Gly) (interchain with G-Cter in SUMO2). The residue at position 634 (lysine 634) is an N6-acetyllysine. Serine 649 bears the Phosphoserine mark. The segment covering 654-668 has biased composition (polar residues); sequence QVSTRPSQSAGNADV. The span at 671–686 shows a compositional bias: basic residues; sequence KRKRSEKLKQRGPKWK. Serine 713, serine 767, serine 782, and serine 793 each carry phosphoserine. Polar residues predominate over residues 784–793; that stretch reads TKGNSQPLLS.

It belongs to the class I-like SAM-binding methyltransferase superfamily. RsmB/NOP family. In terms of assembly, interacts with MCRS1. Interacts with WDR46. Interacts with RRP1B. Interacts with NPM1, NOP56, FBL, RUVBL1 and NUFIP1. Post-translationally, citrullinated by PADI4.

It localises to the nucleus. The protein resides in the nucleolus. It catalyses the reaction a cytidine in 28S rRNA + S-adenosyl-L-methionine = a 5-methylcytidine in 28S rRNA + S-adenosyl-L-homocysteine + H(+). Its function is as follows. S-adenosyl-L-methionine-dependent methyltransferase that specifically methylates the C(5) position of cytosine 4447 in 28S rRNA. Required for efficient rRNA processing and 60S ribosomal subunit biogenesis. Regulates pre-rRNA processing through non-catalytic complex formation with box C/D snoRNAs and facilitates the recruitment of U3 and U8 snoRNAs to pre-90S ribosomal particles and their stable assembly into snoRNP complexes. May play a role in the regulation of the cell cycle and the increased nucleolar activity that is associated with the cell proliferation. This chain is 28S rRNA (cytosine-C(5))-methyltransferase (Nop2), found in Mus musculus (Mouse).